Here is a 72-residue protein sequence, read N- to C-terminus: MPKQNLHPKWYAEAKVYCDGQLIMTIGSTKSELNVDIWSGNHPFYTGSQKMLDTEGRVERFMRKYGLKENNS.

Belongs to the bacterial ribosomal protein bL31 family. Type A subfamily. In terms of assembly, part of the 50S ribosomal subunit.

The protein resides in the plastid. It is found in the chloroplast. Binds the 23S rRNA. The chain is Large ribosomal subunit protein bL31c from Guillardia theta (Cryptophyte).